The primary structure comprises 168 residues: Mesencephalic astrocyte-derived neurotrophic factor homolog (168 aa).

An N-terminal signal peptide occupies residues 1–17; it reads MSRLVLLISLVIVVASA. Cystine bridges form between cysteine 22–cysteine 109, cysteine 25–cysteine 97, cysteine 55–cysteine 66, and cysteine 143–cysteine 146.

It belongs to the ARMET family. Expressed in the intestine, spermatheca and nervous system. Expressed in the hypoderm. Expressed in structures of the excretory system. Not expressed in the male gonad.

It localises to the secreted. It is found in the endoplasmic reticulum lumen. Functionally, inhibits endoplasmic reticulum (ER) stress response. Retained in the ER under normal conditions and is up-regulated and secreted by the ER in response to ER stress and hypoxia. Following secretion by the ER, directly binds to 3-O-sulfogalactosylceramide, a lipid sulfatide in the outer cell membrane of target cells. Sulfatide binding promotes its cellular uptake by endocytosis, and is required for its role in alleviating ER stress under ER stress conditions. Has a neuroprotective role, ensuring survival of dopaminergic neurons during normal growth. This Caenorhabditis elegans protein is Mesencephalic astrocyte-derived neurotrophic factor homolog.